Consider the following 349-residue polypeptide: Selenide, water dikinase (349 aa).

Residue Cys-17 is part of the active site. Residues Lys-20 and Met-48–Asp-50 each bind ATP. Asp-51 provides a ligand contact to Mg(2+). ATP is bound by residues Asp-68, Asp-91, and Gly-139 to Ser-141. A Mg(2+)-binding site is contributed by Asp-91. Asp-227 lines the Mg(2+) pocket.

The protein belongs to the selenophosphate synthase 1 family. Class I subfamily. In terms of assembly, homodimer. It depends on Mg(2+) as a cofactor.

The catalysed reaction is hydrogenselenide + ATP + H2O = selenophosphate + AMP + phosphate + 2 H(+). In terms of biological role, synthesizes selenophosphate from selenide and ATP. This chain is Selenide, water dikinase, found in Rhizobium meliloti (strain 1021) (Ensifer meliloti).